The following is a 125-amino-acid chain: Small ribosomal subunit protein eS6 (125 aa).

The disordered stretch occupies residues 90 to 109; it reads KGPGFRPKEKGERRKKTVRG.

It belongs to the eukaryotic ribosomal protein eS6 family. In terms of assembly, part of the 30S ribosomal subunit.

This is Small ribosomal subunit protein eS6 from Pyrococcus furiosus (strain ATCC 43587 / DSM 3638 / JCM 8422 / Vc1).